Consider the following 314-residue polypeptide: Trimethylamine N-oxide-binding protein (314 aa).

The first 24 residues, 1 to 24, serve as a signal peptide directing secretion; the sequence is MKKIVSLMSALVISVVSFAGISNA. Residues tryptophan 38, tryptophan 85, glutamate 114, tryptophan 164, and tryptophan 212 each coordinate trimethylamine N-oxide.

In terms of assembly, the complex is probably composed of two ATP-binding proteins (TmoW), two transmembrane proteins (TmoV) and a solute-binding protein (TmoX).

The protein localises to the periplasm. In terms of biological role, part of the ABC transporter complex TmoXWV involved in trimethylamine N-oxide (TMAO) import. Possesses a high binding affinity toward TMAO, but presents little binding affinity toward betaine, carnitine, trimethylamine (TMA) or dimethylamine (DMA). This is Trimethylamine N-oxide-binding protein from Pelagibacter ubique (strain HTCC1062).